We begin with the raw amino-acid sequence, 572 residues long: 3-ketosteroid oxygenase (572 aa).

2 helical membrane passes run 52-72 and 84-104; these read AFAL…RNFL and YFMR…FIRI.

It belongs to the cytochrome P450 family. Expressed in the 2 embryonic head hypodermal cells XXXL/R.

It is found in the membrane. The enzyme catalyses 5alpha-cholest-7-en-3-one + 3 reduced [NADPH--hemoprotein reductase] + 3 O2 = (25S)-Delta7-dafachronate + 3 oxidized [NADPH--hemoprotein reductase] + 4 H2O + 4 H(+). It carries out the reaction cholest-4-en-3-one + 3 reduced [NADPH--hemoprotein reductase] + 3 O2 = (25S)-3-oxocholest-4-en-26-oate + 3 oxidized [NADPH--hemoprotein reductase] + 4 H2O + 4 H(+). It participates in steroid hormone biosynthesis; dafachronic acid biosynthesis. Its function is as follows. Converts the 3-keto steroids 4-cholesten-3-one and lathosterone into the carboxylic metabolites 3-keto-4-cholestenate (Delta(4)-dafachronic acid, Delta(4)-DA) and 3-keto-7,(5a)-cholestenate (Delta(7)-dafachronic acid, Delta(7)-DA) respectively, by catalyzing successive oxidations at C-26. Dafachronic acids bind directly to the nuclear hormone receptor (NHR) DAF-12, suppressing dauer formation and inducing reproductive growth. In a non-cell autonomous manner, negatively regulates body wall muscle arm extensions to motor neurons probably by preventing daf-12 isoform b activation. May be involved in thermotolerance. This Caenorhabditis elegans protein is 3-ketosteroid oxygenase (daf-9).